Here is a 261-residue protein sequence, read N- to C-terminus: tRNA pseudouridine synthase A (261 aa).

Catalysis depends on aspartate 51, which acts as the Nucleophile. A substrate-binding site is contributed by tyrosine 109.

Belongs to the tRNA pseudouridine synthase TruA family. As to quaternary structure, homodimer.

It carries out the reaction uridine(38/39/40) in tRNA = pseudouridine(38/39/40) in tRNA. Its function is as follows. Formation of pseudouridine at positions 38, 39 and 40 in the anticodon stem and loop of transfer RNAs. The protein is tRNA pseudouridine synthase A of Shewanella baltica (strain OS223).